We begin with the raw amino-acid sequence, 63 residues long: Prokaryotic ubiquitin-like protein Pup (63 aa).

Residues Met-1–Thr-35 form a disordered region. The segment at Asp-19 to Tyr-57 is ARC ATPase binding. Glu-63 participates in a covalent cross-link: Isoglutamyl lysine isopeptide (Glu-Lys) (interchain with K-? in acceptor proteins).

It belongs to the prokaryotic ubiquitin-like protein family. As to quaternary structure, strongly interacts with the proteasome-associated ATPase ARC through a hydrophobic interface; the interacting region of Pup lies in its C-terminal half. There is one Pup binding site per ARC hexamer ring.

The protein operates within protein degradation; proteasomal Pup-dependent pathway. Functionally, protein modifier that is covalently attached to lysine residues of substrate proteins, thereby targeting them for proteasomal degradation. The tagging system is termed pupylation. The protein is Prokaryotic ubiquitin-like protein Pup of Corynebacterium aurimucosum (strain ATCC 700975 / DSM 44827 / CIP 107346 / CN-1) (Corynebacterium nigricans).